Consider the following 399-residue polypeptide: Argininosuccinate synthase (399 aa).

12–20 contributes to the ATP binding site; the sequence is AFSGGLDTS. Position 90 (tyrosine 90) interacts with L-citrulline. Glycine 120 lines the ATP pocket. L-aspartate contacts are provided by threonine 122, asparagine 126, and aspartate 127. Residue asparagine 126 participates in L-citrulline binding. L-citrulline-binding residues include arginine 130, serine 175, glutamate 260, and tyrosine 272.

It belongs to the argininosuccinate synthase family. Type 1 subfamily. As to quaternary structure, homotetramer.

It is found in the cytoplasm. It carries out the reaction L-citrulline + L-aspartate + ATP = 2-(N(omega)-L-arginino)succinate + AMP + diphosphate + H(+). Its pathway is amino-acid biosynthesis; L-arginine biosynthesis; L-arginine from L-ornithine and carbamoyl phosphate: step 2/3. This chain is Argininosuccinate synthase, found in Methanothermobacter thermautotrophicus (strain ATCC 29096 / DSM 1053 / JCM 10044 / NBRC 100330 / Delta H) (Methanobacterium thermoautotrophicum).